We begin with the raw amino-acid sequence, 443 residues long: Enolase B (443 aa).

His-156 and Glu-165 together coordinate substrate. The active-site Proton donor is Glu-208. Positions 243, 296, and 323 each coordinate Mg(2+). Residues Glu-296 and Asp-323 each contribute to the substrate site. Catalysis depends on Lys-348, which acts as the Proton acceptor. Residues 375-378 and Lys-399 each bind substrate; that span reads SHRS.

Belongs to the enolase family. As to quaternary structure, homodimer. Mg(2+) serves as cofactor.

It localises to the cytoplasm. It catalyses the reaction (2R)-2-phosphoglycerate = phosphoenolpyruvate + H2O. It functions in the pathway carbohydrate degradation; glycolysis; pyruvate from D-glyceraldehyde 3-phosphate: step 4/5. This chain is Enolase B (enoB), found in Dictyostelium discoideum (Social amoeba).